A 273-amino-acid polypeptide reads, in one-letter code: 2,3,4,5-tetrahydropyridine-2,6-dicarboxylate N-succinyltransferase (273 aa).

Residues Arg106 and Asp143 each coordinate substrate.

This sequence belongs to the transferase hexapeptide repeat family. Homotrimer.

The protein resides in the cytoplasm. The catalysed reaction is (S)-2,3,4,5-tetrahydrodipicolinate + succinyl-CoA + H2O = (S)-2-succinylamino-6-oxoheptanedioate + CoA. It participates in amino-acid biosynthesis; L-lysine biosynthesis via DAP pathway; LL-2,6-diaminopimelate from (S)-tetrahydrodipicolinate (succinylase route): step 1/3. The chain is 2,3,4,5-tetrahydropyridine-2,6-dicarboxylate N-succinyltransferase from Wolbachia pipientis wMel.